The following is a 183-amino-acid chain: Capsid protein (183 aa).

The segment at 143–183 is disordered; sequence LPENAVVRRRGRSPRRRTPSPRRRRSQSPRRRRSQSRGSQC. Over residues 149 to 177 the composition is skewed to basic residues; the sequence is VRRRGRSPRRRTPSPRRRRSQSPRRRRSQ. Phosphoserine; by host is present on residues S155, S162, and S170. One copy of the 1; half-length repeat lies at 155 to 161; the sequence is SPRRRTP. Positions 155 to 177 are 3 X 8 AA repeats of S-P-R-R-R-[PR]-S-Q; it reads SPRRRTPSPRRRRSQSPRRRRSQ. Positions 158–175 match the Bipartite nuclear localization signal motif; it reads RRTPSPRRRRSQSPRRRR. A run of 2 repeats spans residues 162–169 and 170–177. The tract at residues 177-183 is RNA binding; sequence QSRGSQC.

Belongs to the orthohepadnavirus core antigen family. As to quaternary structure, homodimerizes, then multimerizes. Interacts with cytosol exposed regions of viral L glycoprotein present in the reticulum-to-Golgi compartment. Interacts with human FLNB. Phosphorylated form interacts with host importin alpha; this interaction depends on the exposure of the NLS, which itself depends upon genome maturation and/or phosphorylation of the capsid protein. Interacts with host NUP153. In terms of processing, phosphorylated by host SRPK1, SRPK2, and maybe protein kinase C or GAPDH. Phosphorylation is critical for pregenomic RNA packaging. Protein kinase C phosphorylation is stimulated by HBx protein and may play a role in transport of the viral genome to the nucleus at the late step during the viral replication cycle.

The protein resides in the virion. It localises to the host cytoplasm. Functionally, self assembles to form an icosahedral capsid. Most capsids appear to be large particles with an icosahedral symmetry of T=4 and consist of 240 copies of capsid protein, though a fraction forms smaller T=3 particles consisting of 180 capsid proteins. Entering capsids are transported along microtubules to the nucleus. Phosphorylation of the capsid is thought to induce exposure of nuclear localization signal in the C-terminal portion of the capsid protein that allows binding to the nuclear pore complex via the importin (karyopherin-) alpha and beta. Capsids are imported in intact form through the nuclear pore into the nuclear basket, where it probably binds NUP153. Only capsids that contain the mature viral genome can release the viral DNA and capsid protein into the nucleoplasm. Immature capsids get stuck in the basket. Capsids encapsulate the pre-genomic RNA and the P protein. Pre-genomic RNA is reverse-transcribed into DNA while the capsid is still in the cytoplasm. The capsid can then either be directed to the nucleus, providing more genomes for transcription, or bud through the endoplasmic reticulum to provide new virions. The protein is Capsid protein of Homo sapiens (Human).